The primary structure comprises 91 residues: Elongation factor 1-beta (91 aa).

Belongs to the EF-1-beta/EF-1-delta family.

In terms of biological role, promotes the exchange of GDP for GTP in EF-1-alpha/GDP, thus allowing the regeneration of EF-1-alpha/GTP that could then be used to form the ternary complex EF-1-alpha/GTP/AAtRNA. The sequence is that of Elongation factor 1-beta from Thermococcus kodakarensis (strain ATCC BAA-918 / JCM 12380 / KOD1) (Pyrococcus kodakaraensis (strain KOD1)).